Here is a 192-residue protein sequence, read N- to C-terminus: Density-regulated protein homolog (192 aa).

Residues 62–116 (GLEISDEPAADGDEKKKQKRGGKGSKTGAAAAQAAASGGKKKGGGPQKVTLQREP) are disordered. A compositionally biased stretch (low complexity) spans 87-99 (KTGAAAAQAAASG). The SUI1 domain occupies 117-176 (RGKKSVTVIKGLATFDIDLKVASKLFAQKFACGSSVTGADEIVIQGDVKDDLLDLIPEKW).

The protein belongs to the DENR family.

This is Density-regulated protein homolog from Caenorhabditis elegans.